The chain runs to 85 residues: Large ribosomal subunit protein bL27 (85 aa).

Residues 1–21 (MAHKKAAGSTKNGRDSNAKRL) are disordered.

It belongs to the bacterial ribosomal protein bL27 family.

The polypeptide is Large ribosomal subunit protein bL27 (Hydrogenovibrio crunogenus (strain DSM 25203 / XCL-2) (Thiomicrospira crunogena)).